The primary structure comprises 938 residues: Isoleucine--tRNA ligase (938 aa).

The 'HIGH' region motif lies at 58 to 68 (PYANGNIHIGH). An L-isoleucyl-5'-AMP-binding site is contributed by glutamate 561. A 'KMSKS' region motif is present at residues 602–606 (KMSKS). Lysine 605 provides a ligand contact to ATP. Zn(2+) is bound by residues cysteine 901, cysteine 904, cysteine 921, and cysteine 924.

This sequence belongs to the class-I aminoacyl-tRNA synthetase family. IleS type 1 subfamily. In terms of assembly, monomer. It depends on Zn(2+) as a cofactor.

The protein localises to the cytoplasm. It carries out the reaction tRNA(Ile) + L-isoleucine + ATP = L-isoleucyl-tRNA(Ile) + AMP + diphosphate. Its function is as follows. Catalyzes the attachment of isoleucine to tRNA(Ile). As IleRS can inadvertently accommodate and process structurally similar amino acids such as valine, to avoid such errors it has two additional distinct tRNA(Ile)-dependent editing activities. One activity is designated as 'pretransfer' editing and involves the hydrolysis of activated Val-AMP. The other activity is designated 'posttransfer' editing and involves deacylation of mischarged Val-tRNA(Ile). This Yersinia enterocolitica serotype O:8 / biotype 1B (strain NCTC 13174 / 8081) protein is Isoleucine--tRNA ligase.